Reading from the N-terminus, the 406-residue chain is UPF0761 membrane protein NMB0524 (406 aa).

6 helical membrane-spanning segments follow: residues 43-63 (LLAL…FPVF), 100-120 (LTAI…RTID), 139-159 (FLVY…GISF), 176-196 (WSGA…LWGL), 210-230 (AFVG…LFTW), and 248-268 (VPFF…GAVL).

This sequence belongs to the UPF0761 family.

It localises to the cell inner membrane. The polypeptide is UPF0761 membrane protein NMB0524 (Neisseria meningitidis serogroup B (strain ATCC BAA-335 / MC58)).